We begin with the raw amino-acid sequence, 239 residues long: Large ribosomal subunit protein uL1 (239 aa).

It belongs to the universal ribosomal protein uL1 family. Part of the 50S ribosomal subunit.

Functionally, binds directly to 23S rRNA. The L1 stalk is quite mobile in the ribosome, and is involved in E site tRNA release. Its function is as follows. Protein L1 is also a translational repressor protein, it controls the translation of the L11 operon by binding to its mRNA. In Mycolicibacterium gilvum (strain PYR-GCK) (Mycobacterium gilvum (strain PYR-GCK)), this protein is Large ribosomal subunit protein uL1.